The primary structure comprises 184 residues: ATP synthase subunit b, chloroplastic (184 aa).

Residues 27–49 traverse the membrane as a helical segment; the sequence is FATNPINLSVVLGVLIFFGKGVL.

The protein belongs to the ATPase B chain family. F-type ATPases have 2 components, F(1) - the catalytic core - and F(0) - the membrane proton channel. F(1) has five subunits: alpha(3), beta(3), gamma(1), delta(1), epsilon(1). F(0) has four main subunits: a(1), b(1), b'(1) and c(10-14). The alpha and beta chains form an alternating ring which encloses part of the gamma chain. F(1) is attached to F(0) by a central stalk formed by the gamma and epsilon chains, while a peripheral stalk is formed by the delta, b and b' chains.

Its subcellular location is the plastid. It localises to the chloroplast thylakoid membrane. In terms of biological role, f(1)F(0) ATP synthase produces ATP from ADP in the presence of a proton or sodium gradient. F-type ATPases consist of two structural domains, F(1) containing the extramembraneous catalytic core and F(0) containing the membrane proton channel, linked together by a central stalk and a peripheral stalk. During catalysis, ATP synthesis in the catalytic domain of F(1) is coupled via a rotary mechanism of the central stalk subunits to proton translocation. Functionally, component of the F(0) channel, it forms part of the peripheral stalk, linking F(1) to F(0). The sequence is that of ATP synthase subunit b, chloroplastic from Amborella trichopoda.